The primary structure comprises 186 residues: MTSDEILMDAEERMDKAVSVLQNNLSGIRTGRANPGLVDSIKVEVYGSLTPLKQLASIGTPEPQQILIRPYDATTIKDIEKAIVAGDLGLNPQNDGRVIRLNVPPLSGEVRKKMVSRIKELAEEAKVSIRNIRRDANKAAETAEKDKEMTEDDRDKTKDQVQELTKKAETNVNESAKAREAEVMED.

Composition is skewed to basic and acidic residues over residues 134 to 169 (RDAN…KKAE) and 176 to 186 (AKAREAEVMED). The interval 134-186 (RDANKAAETAEKDKEMTEDDRDKTKDQVQELTKKAETNVNESAKAREAEVMED) is disordered.

Belongs to the RRF family.

Its subcellular location is the cytoplasm. Its function is as follows. Responsible for the release of ribosomes from messenger RNA at the termination of protein biosynthesis. May increase the efficiency of translation by recycling ribosomes from one round of translation to another. In Rhodopirellula baltica (strain DSM 10527 / NCIMB 13988 / SH1), this protein is Ribosome-recycling factor.